A 367-amino-acid chain; its full sequence is Holliday junction branch migration complex subunit RuvB (367 aa).

Residues 2–196 (TDEPLTDRPP…FGFTARLDFY (195 aa)) form a large ATPase domain (RuvB-L) region. ATP is bound by residues Leu35, Arg36, Gly77, Lys80, Thr81, Thr82, 143–145 (EDF), Arg186, Tyr196, and Arg233. Position 81 (Thr81) interacts with Mg(2+). The segment at 197–267 (EPADLERIVH…VAQAALAVYE (71 aa)) is small ATPAse domain (RuvB-S). Residues 270 to 367 (EHGLDRLDRA…IDRDAGEPTA (98 aa)) are head domain (RuvB-H). DNA is bound by residues Arg325 and Arg330.

It belongs to the RuvB family. Homohexamer. Forms an RuvA(8)-RuvB(12)-Holliday junction (HJ) complex. HJ DNA is sandwiched between 2 RuvA tetramers; dsDNA enters through RuvA and exits via RuvB. An RuvB hexamer assembles on each DNA strand where it exits the tetramer. Each RuvB hexamer is contacted by two RuvA subunits (via domain III) on 2 adjacent RuvB subunits; this complex drives branch migration. In the full resolvosome a probable DNA-RuvA(4)-RuvB(12)-RuvC(2) complex forms which resolves the HJ.

It localises to the cytoplasm. It catalyses the reaction ATP + H2O = ADP + phosphate + H(+). The RuvA-RuvB-RuvC complex processes Holliday junction (HJ) DNA during genetic recombination and DNA repair, while the RuvA-RuvB complex plays an important role in the rescue of blocked DNA replication forks via replication fork reversal (RFR). RuvA specifically binds to HJ cruciform DNA, conferring on it an open structure. The RuvB hexamer acts as an ATP-dependent pump, pulling dsDNA into and through the RuvAB complex. RuvB forms 2 homohexamers on either side of HJ DNA bound by 1 or 2 RuvA tetramers; 4 subunits per hexamer contact DNA at a time. Coordinated motions by a converter formed by DNA-disengaged RuvB subunits stimulates ATP hydrolysis and nucleotide exchange. Immobilization of the converter enables RuvB to convert the ATP-contained energy into a lever motion, pulling 2 nucleotides of DNA out of the RuvA tetramer per ATP hydrolyzed, thus driving DNA branch migration. The RuvB motors rotate together with the DNA substrate, which together with the progressing nucleotide cycle form the mechanistic basis for DNA recombination by continuous HJ branch migration. Branch migration allows RuvC to scan DNA until it finds its consensus sequence, where it cleaves and resolves cruciform DNA. This Acidothermus cellulolyticus (strain ATCC 43068 / DSM 8971 / 11B) protein is Holliday junction branch migration complex subunit RuvB.